The following is a 511-amino-acid chain: 2-isopropylmalate synthase (511 aa).

The Pyruvate carboxyltransferase domain occupies 5–267 (LIIFDTTLRD…DTNIDTMHIL (263 aa)). Residues Asp-14, His-202, His-204, and Asn-238 each coordinate Mn(2+). The segment at 393–511 (KLVSLKVCTE…TVTNKAHPQI (119 aa)) is regulatory domain.

The protein belongs to the alpha-IPM synthase/homocitrate synthase family. LeuA type 1 subfamily. In terms of assembly, homodimer. Mn(2+) is required as a cofactor.

It localises to the cytoplasm. It catalyses the reaction 3-methyl-2-oxobutanoate + acetyl-CoA + H2O = (2S)-2-isopropylmalate + CoA + H(+). It participates in amino-acid biosynthesis; L-leucine biosynthesis; L-leucine from 3-methyl-2-oxobutanoate: step 1/4. Functionally, catalyzes the condensation of the acetyl group of acetyl-CoA with 3-methyl-2-oxobutanoate (2-ketoisovalerate) to form 3-carboxy-3-hydroxy-4-methylpentanoate (2-isopropylmalate). The chain is 2-isopropylmalate synthase from Vesicomyosocius okutanii subsp. Calyptogena okutanii (strain HA).